A 259-amino-acid polypeptide reads, in one-letter code: GEM-like protein 1 (259 aa).

Residues 1-11 (MSGQENHDHGR) show a composition bias toward basic and acidic residues. Residues 1-79 (MSGQENHDHG…PSPAPRNTMD (79 aa)) are disordered. A compositionally biased stretch (low complexity) spans 13–30 (SSTPAAASEPSKAAAHSS). Residues 138-215 (KVFKQTFDCL…NQLKAVNPST (78 aa)) enclose the GRAM domain.

It belongs to the GEM family. As to quaternary structure, interacts with AFH1.

The polypeptide is GEM-like protein 1 (FIP1) (Arabidopsis thaliana (Mouse-ear cress)).